A 298-amino-acid polypeptide reads, in one-letter code: Ribosomal RNA small subunit methyltransferase A (298 aa).

S-adenosyl-L-methionine contacts are provided by asparagine 35, leucine 37, glycine 62, glutamate 83, aspartate 108, and asparagine 133.

This sequence belongs to the class I-like SAM-binding methyltransferase superfamily. rRNA adenine N(6)-methyltransferase family. RsmA subfamily.

It is found in the cytoplasm. It carries out the reaction adenosine(1518)/adenosine(1519) in 16S rRNA + 4 S-adenosyl-L-methionine = N(6)-dimethyladenosine(1518)/N(6)-dimethyladenosine(1519) in 16S rRNA + 4 S-adenosyl-L-homocysteine + 4 H(+). Specifically dimethylates two adjacent adenosines (A1518 and A1519) in the loop of a conserved hairpin near the 3'-end of 16S rRNA in the 30S particle. May play a critical role in biogenesis of 30S subunits. The chain is Ribosomal RNA small subunit methyltransferase A from Streptococcus pyogenes serotype M4 (strain MGAS10750).